The primary structure comprises 268 residues: Undecaprenyl-diphosphatase (268 aa).

7 consecutive transmembrane segments (helical) span residues 5–25 (SIIS…IPVS), 43–63 (GNTF…LVYF), 84–104 (LSVL…HGFI), 109–129 (FETP…LYVI), 184–204 (AAEF…ALDL), 213–233 (IDDI…GIFV), and 248–268 (PFAI…WLLG).

This sequence belongs to the UppP family.

The protein resides in the cell inner membrane. The enzyme catalyses di-trans,octa-cis-undecaprenyl diphosphate + H2O = di-trans,octa-cis-undecaprenyl phosphate + phosphate + H(+). Functionally, catalyzes the dephosphorylation of undecaprenyl diphosphate (UPP). Confers resistance to bacitracin. The polypeptide is Undecaprenyl-diphosphatase (Sinorhizobium medicae (strain WSM419) (Ensifer medicae)).